The chain runs to 476 residues: Bifunctional protein HldE (476 aa).

A ribokinase region spans residues 1–318 (MKPILPDYNN…AEAIHGSRDT (318 aa)). Residue 195 to 198 (NMSE) coordinates ATP. The active site involves Asp-264. The tract at residues 344–476 (MTNGCFDILH…IIDAIKGGRG (133 aa)) is cytidylyltransferase.

This sequence in the N-terminal section; belongs to the carbohydrate kinase PfkB family. It in the C-terminal section; belongs to the cytidylyltransferase family. As to quaternary structure, homodimer.

It catalyses the reaction D-glycero-beta-D-manno-heptose 7-phosphate + ATP = D-glycero-beta-D-manno-heptose 1,7-bisphosphate + ADP + H(+). The catalysed reaction is D-glycero-beta-D-manno-heptose 1-phosphate + ATP + H(+) = ADP-D-glycero-beta-D-manno-heptose + diphosphate. Its pathway is nucleotide-sugar biosynthesis; ADP-L-glycero-beta-D-manno-heptose biosynthesis; ADP-L-glycero-beta-D-manno-heptose from D-glycero-beta-D-manno-heptose 7-phosphate: step 1/4. It participates in nucleotide-sugar biosynthesis; ADP-L-glycero-beta-D-manno-heptose biosynthesis; ADP-L-glycero-beta-D-manno-heptose from D-glycero-beta-D-manno-heptose 7-phosphate: step 3/4. The protein operates within bacterial outer membrane biogenesis; LPS core biosynthesis. In terms of biological role, catalyzes the phosphorylation of D-glycero-D-manno-heptose 7-phosphate at the C-1 position to selectively form D-glycero-beta-D-manno-heptose-1,7-bisphosphate. Its function is as follows. Catalyzes the ADP transfer from ATP to D-glycero-beta-D-manno-heptose 1-phosphate, yielding ADP-D-glycero-beta-D-manno-heptose. The protein is Bifunctional protein HldE of Vibrio vulnificus (strain CMCP6).